The sequence spans 198 residues: tRNA (pseudouridine(54)-N(1))-methyltransferase (198 aa).

S-adenosyl-L-methionine-binding positions include Leu130, Gly153, Leu176–Leu181, and Cys186.

This sequence belongs to the methyltransferase superfamily. TrmY family. Homodimer.

The protein localises to the cytoplasm. The catalysed reaction is pseudouridine(54) in tRNA + S-adenosyl-L-methionine = N(1)-methylpseudouridine(54) in tRNA + S-adenosyl-L-homocysteine + H(+). Its function is as follows. Specifically catalyzes the N1-methylation of pseudouridine at position 54 (Psi54) in tRNAs. The sequence is that of tRNA (pseudouridine(54)-N(1))-methyltransferase from Methanococcus maripaludis (strain C6 / ATCC BAA-1332).